We begin with the raw amino-acid sequence, 104 residues long: ATP-dependent Clp protease adapter protein ClpS (104 aa).

The protein belongs to the ClpS family. As to quaternary structure, binds to the N-terminal domain of the chaperone ClpA.

Functionally, involved in the modulation of the specificity of the ClpAP-mediated ATP-dependent protein degradation. The protein is ATP-dependent Clp protease adapter protein ClpS of Nitratidesulfovibrio vulgaris (strain ATCC 29579 / DSM 644 / CCUG 34227 / NCIMB 8303 / VKM B-1760 / Hildenborough) (Desulfovibrio vulgaris).